The chain runs to 329 residues: Helicase VP6-A (329 aa).

Disordered regions lie at residues 28 to 130 (NLVD…TNGG) and 189 to 232 (DLRR…SEEP). Composition is skewed to basic and acidic residues over residues 36 to 58 (EGGKEDKTEPKEESKAEGSKDGE), 65 to 83 (GQKEEGGKETKDADVDRRI), and 96 to 109 (SGERANENANRGDG). ATP is bound at residue lysine 110. The span at 110-129 (KVGGGGGDADAGVGATGTNG) shows a compositional bias: gly residues. Composition is skewed to basic and acidic residues over residues 189–207 (DLRRKEKNGTHAKAVERGG) and 215–232 (HGDAQREGVEEEKTSEEP).

The protein belongs to the reoviruses VP6 family. In terms of assembly, homohexamer.

Its subcellular location is the virion. The catalysed reaction is ATP + H2O = ADP + phosphate + H(+). ATP dependent RNA helicase essential for RNA packaging and viral transcription. Possesses ss- and dsRNA-binding capacity. The polypeptide is Helicase VP6-A (Segment-9) (Bluetongue virus 10 (isolate USA) (BTV 10)).